A 244-amino-acid polypeptide reads, in one-letter code: Ribosomal RNA small subunit methyltransferase G (244 aa).

Residues glycine 79, phenylalanine 84, 130 to 131 (AE), and arginine 150 each bind S-adenosyl-L-methionine. The interval 221–244 (KKPSPKRYPRKPGTPAKQPLTAPM) is disordered.

The protein belongs to the methyltransferase superfamily. RNA methyltransferase RsmG family.

The protein resides in the cytoplasm. Its function is as follows. Specifically methylates the N7 position of a guanine in 16S rRNA. The sequence is that of Ribosomal RNA small subunit methyltransferase G from Lactiplantibacillus plantarum (strain ATCC BAA-793 / NCIMB 8826 / WCFS1) (Lactobacillus plantarum).